Reading from the N-terminus, the 766-residue chain is Serine/threonine-protein kinase DCLK2 (766 aa).

The segment at 1 to 45 is disordered; it reads MASTRSIELEHFEERDKRPRPGSRRGAPSSSGGSSSSGPKGNGLI. A compositionally biased stretch (basic and acidic residues) spans 7–19; the sequence is IELEHFEERDKRP. Residues 24 to 39 are compositionally biased toward low complexity; that stretch reads RRGAPSSSGGSSSSGP. Thr-61 carries the phosphothreonine modification. 2 consecutive Doublecortin domains span residues 72–158 and 197–280; these read KKAR…VDYT and KLVT…AQDD. Low complexity-rich tracts occupy residues 300-312 and 324-347; these read AVKY…PGPS and TPSS…SPGS. Residues 300–378 are disordered; the sequence is AVKYSGSKSP…ELDRCISPEG (79 aa). Ser-362 bears the Phosphoserine mark. The Protein kinase domain maps to 394–651; sequence YKIGKVIGDG…AGQILSHPWV (258 aa). ATP is bound by residues 400–408 and Lys-423; that span reads IGDGNFAVV. Asp-515 acts as the Proton acceptor in catalysis. At Ser-647 the chain carries Phosphoserine. Thr-666 bears the Phosphothreonine mark. Residues 707–766 form a disordered region; that stretch reads CQDSGRPGMEPISPVPPSVEEIPVPGEAVPAPTPPESPTPHPPPAAPGGERAGTWRRHRD. Residues 724-736 are compositionally biased toward low complexity; the sequence is SVEEIPVPGEAVP. Pro residues predominate over residues 737 to 752; sequence APTPPESPTPHPPPAA.

The protein belongs to the protein kinase superfamily. CAMK Ser/Thr protein kinase family. CaMK subfamily. Binds to and stabilizes microtubules. Interacts with MAPK8IP1/JIP-1, MAPK8IP2/JIP-2, MAPK9/JNK2, PPP1R9B/NEURABIN-2 and actin. Autophosphorylated. Expressed in the brain, heart and eyes.

The protein localises to the cytoplasm. It localises to the cytoskeleton. The enzyme catalyses L-seryl-[protein] + ATP = O-phospho-L-seryl-[protein] + ADP + H(+). The catalysed reaction is L-threonyl-[protein] + ATP = O-phospho-L-threonyl-[protein] + ADP + H(+). Functionally, protein kinase with a significantly reduced C(a2+)/CAM affinity and dependence compared to other members of the CaMK family. May play a role in the down-regulation of CRE-dependent gene activation probably by phosphorylation of the CREB coactivator CRTC2/TORC2 and the resulting retention of TORC2 in the cytoplasm. The chain is Serine/threonine-protein kinase DCLK2 (DCLK2) from Homo sapiens (Human).